Here is a 110-residue protein sequence, read N- to C-terminus: UPF0473 protein SSP1146 (110 aa).

The protein belongs to the UPF0473 family.

The polypeptide is UPF0473 protein SSP1146 (Staphylococcus saprophyticus subsp. saprophyticus (strain ATCC 15305 / DSM 20229 / NCIMB 8711 / NCTC 7292 / S-41)).